A 246-amino-acid chain; its full sequence is Probable transcriptional regulatory protein TM1040_1893 (246 aa).

The interval 1 to 21 (MAGHSKWANIQHRKGRQDAAR) is disordered.

This sequence belongs to the TACO1 family.

Its subcellular location is the cytoplasm. This Ruegeria sp. (strain TM1040) (Silicibacter sp.) protein is Probable transcriptional regulatory protein TM1040_1893.